The following is a 242-amino-acid chain: uncharacterized protein (242 aa).

Positions 2-69 constitute an S4 RNA-binding domain; that stretch reads YRLAKIISNA…KPRLWIYYKP (68 aa). Catalysis depends on Asp102, which acts as the Nucleophile.

The protein belongs to the pseudouridine synthase RsuA family.

It catalyses the reaction a uridine in RNA = a pseudouridine in RNA. This is an uncharacterized protein from Rickettsia typhi (strain ATCC VR-144 / Wilmington).